Reading from the N-terminus, the 118-residue chain is Small ribosomal subunit protein uS13 (118 aa).

Positions 94–118 (GLPVRGQRTKTNARTRKGPRKPIRK) are disordered.

This sequence belongs to the universal ribosomal protein uS13 family. Part of the 30S ribosomal subunit. Forms a loose heterodimer with protein S19. Forms two bridges to the 50S subunit in the 70S ribosome.

Its function is as follows. Located at the top of the head of the 30S subunit, it contacts several helices of the 16S rRNA. In the 70S ribosome it contacts the 23S rRNA (bridge B1a) and protein L5 of the 50S subunit (bridge B1b), connecting the 2 subunits; these bridges are implicated in subunit movement. Contacts the tRNAs in the A and P-sites. The polypeptide is Small ribosomal subunit protein uS13 (Pseudomonas aeruginosa (strain LESB58)).